Consider the following 321-residue polypeptide: Ribosomal RNA small subunit methyltransferase H (321 aa).

Residues 29–31, D48, Y76, D97, and Q104 each bind S-adenosyl-L-methionine; that span reads GGH. The disordered stretch occupies residues 277–321; that stretch reads LTRGAEPASETEKAENPRAASVRLRAVERTAPNPDHTRKPTGGAS.

Belongs to the methyltransferase superfamily. RsmH family.

It is found in the cytoplasm. It catalyses the reaction cytidine(1402) in 16S rRNA + S-adenosyl-L-methionine = N(4)-methylcytidine(1402) in 16S rRNA + S-adenosyl-L-homocysteine + H(+). Functionally, specifically methylates the N4 position of cytidine in position 1402 (C1402) of 16S rRNA. This chain is Ribosomal RNA small subunit methyltransferase H, found in Frankia casuarinae (strain DSM 45818 / CECT 9043 / HFP020203 / CcI3).